Consider the following 651-residue polypeptide: Probable endo-1,3(4)-beta-glucanase NFIA_089530 (651 aa).

A signal peptide spans 1 to 21 (MAPSSLFLSVGSLIASSLVSA). The 254-residue stretch at 36–289 (ESWQGESFIN…WAGNVFAEST (254 aa)) folds into the GH16 domain. N-linked (GlcNAc...) asparagine glycosylation is present at asparagine 64. Glutamate 145 acts as the Nucleophile in catalysis. Residue glutamate 150 is the Proton donor of the active site. N-linked (GlcNAc...) asparagine glycosylation occurs at asparagine 200. Residues 364 to 378 (PVPAETTAVPQPAQT) show a composition bias toward low complexity. Disordered regions lie at residues 364–422 (PVPA…ESTS) and 508–557 (SEIP…PVPA). 2 stretches are compositionally biased toward polar residues: residues 379–400 (NTVA…TTVP) and 520–535 (QAVS…TAQG). Residues 542 to 557 (SIASASAAPSTIPVPA) show a composition bias toward low complexity. Asparagine 629 is lipidated: GPI-anchor amidated asparagine. A propeptide spans 630–651 (GANRMSVGLSGLIGVMFIAALA) (removed in mature form).

Belongs to the glycosyl hydrolase 16 family.

The protein localises to the cell membrane. It carries out the reaction Endohydrolysis of (1-&gt;3)- or (1-&gt;4)-linkages in beta-D-glucans when the glucose residue whose reducing group is involved in the linkage to be hydrolyzed is itself substituted at C-3.. Mixed-linked glucanase involved in the degradation of complex natural cellulosic substrates. The polypeptide is Probable endo-1,3(4)-beta-glucanase NFIA_089530 (Neosartorya fischeri (strain ATCC 1020 / DSM 3700 / CBS 544.65 / FGSC A1164 / JCM 1740 / NRRL 181 / WB 181) (Aspergillus fischerianus)).